Reading from the N-terminus, the 150-residue chain is Histone deacetylase complex subunit SAP18 (150 aa).

This sequence belongs to the SAP18 family. As to quaternary structure, forms a complex with SIN3 and histone deacetylase. Interacts with the N-terminal residues of TRL. Interacts with BCD; in vitro and yeast cells.

It localises to the nucleus. It is found in the cytoplasm. Its function is as follows. Involved in the tethering of the SIN3 complex to core histone proteins. Interacts with bicoid (bcd) to repress transcription of bicoid target genes in the anterior tip of the embryo; a process known as retraction. Interacts with Trl and binds to Polycomb response elements at the bithorax complex. May contribute to the regulation of other homeotic gene expressions. The chain is Histone deacetylase complex subunit SAP18 (Bin1) from Drosophila melanogaster (Fruit fly).